Reading from the N-terminus, the 1209-residue chain is Neural cell adhesion molecule L1-like protein (1209 aa).

A signal peptide spans 1–25 (MMELPLCGRGLILSLIFLLLKLSAA). Residues 26 to 1083 (EIPLSVQQVP…LYDDISTQGW (1058 aa)) lie on the Extracellular side of the membrane. 2 Ig-like C2-type domains span residues 35–124 (PTIV…EEIE) and 128–223 (PGVP…MKLT). 2 cysteine pairs are disulfide-bonded: Cys57–Cys109 and Cys153–Cys204. Asn87 is a glycosylation site (N-linked (GlcNAc...) asparagine). 2 N-linked (GlcNAc...) asparagine glycosylation sites follow: Asn225 and Asn299. 4 Ig-like C2-type domains span residues 235–328 (PKLL…VTVE), 331–417 (PRWK…ANID), 423–510 (PLIK…ANLD), and 515–607 (TKLR…TQVT). 4 disulfides stabilise this stretch: Cys262/Cys310, Cys352/Cys401, Cys445/Cys494, and Cys536/Cys591. A glycan (N-linked (GlcNAc...) asparagine) is linked at Asn476. The DGEA signature appears at 555-558 (DGEA). N-linked (GlcNAc...) asparagine glycosylation is found at Asn562 and Asn580. Fibronectin type-III domains follow at residues 614 to 709 (PPGN…TPPA), 714 to 807 (NPQN…SGED), 812 to 914 (APVI…TPEG), and 918 to 1015 (QPSF…LGEG). A disordered region spans residues 696 to 717 (HASLPSDHHETPPAAPDKNPQN). Asn767, Asn822, Asn945, and Asn1027 each carry an N-linked (GlcNAc...) asparagine glycan. A helical transmembrane segment spans residues 1084-1104 (FIGLMCAIALLTLILLTICFV). The Cytoplasmic segment spans residues 1105 to 1209 (KRNRGGKYSV…SSTATFPLRA (105 aa)). The span at 1115-1133 (KEKEDLHPDPEVQSAKDET) shows a compositional bias: basic and acidic residues. The segment at 1115–1170 (KEKEDLHPDPEVQSAKDETFGEYSDSDEKPLKGSLRSLNRNMQPTESADSLVEYGE) is disordered. Residues Ser1148, Ser1161, and Ser1181 each carry the phosphoserine modification. A compositionally biased stretch (polar residues) spans 1150-1162 (RSLNRNMQPTESA). Positions 1182–1186 (FIGAY) match the FIG[AQ]Y motif.

Belongs to the immunoglobulin superfamily. L1/neurofascin/NgCAM family. In terms of assembly, may interact with L1CAM. May interact with ITGB1/ITGA1 heterodimer and ITGB1/ITGA2 heterodimer as well as with ANK3. Cleavage by metalloprotease ADAM8 in the extracellular part generates 2 soluble forms (125 kDa and 165 kDa) in vitro and is inhibited by metalloprotease inhibitors. In brain extracts, these two soluble forms are also present and are dramatically reduced in mice lacking ADAM8. Cleaved by BACE1. Post-translationally, N-glycosylated. Contains N-linked oligosaccharides with a sulfated carbohydrate structure type HNK-1 (SO4-3-GlcUABeta1,3GalBeta1,4GlcNAc). In terms of processing, O-glycosylated. In terms of tissue distribution, expressed in the brain, in the cerebellum and in the spinal cord. Detected in the retina and the optic nerve. Expressed in neurons and glial cells in the central nervous system and by Schwann cells in the peripheral nervous system.

It localises to the cell membrane. It is found in the secreted. The protein localises to the extracellular space. Its subcellular location is the extracellular matrix. In terms of biological role, extracellular matrix and cell adhesion protein that plays a role in nervous system development and in synaptic plasticity. Both soluble and membranous forms promote neurite outgrowth of cerebellar and hippocampal neurons and suppress neuronal cell death. Plays a role in neuronal positioning of pyramidal neurons as well as in regulation of both the number of interneurons and the efficacy of GABAergic synapses. May play a role in regulating cell migration in nerve regeneration and cortical development. Potentiates integrin-dependent cell migration towards extracellular matrix proteins. Recruits ANK3 to the plasma membrane. The protein is Neural cell adhesion molecule L1-like protein (Chl1) of Mus musculus (Mouse).